Consider the following 555-residue polypeptide: Glucose-6-phosphate isomerase (555 aa).

D-glucose 6-phosphate is bound by residues 169–170, 219–224, Gln-364, Glu-368, His-399, and Lys-521; these read GS and SKTFTT. Residue Glu-368 is the Proton donor of the active site. Catalysis depends on residues His-399 and Lys-521.

It belongs to the GPI family. As to quaternary structure, homodimer.

The protein localises to the cytoplasm. It localises to the cytosol. The catalysed reaction is alpha-D-glucose 6-phosphate = beta-D-fructose 6-phosphate. It participates in carbohydrate degradation; glycolysis; D-glyceraldehyde 3-phosphate and glycerone phosphate from D-glucose: step 2/4. In the cytoplasm, catalyzes the conversion of glucose-6-phosphate to fructose-6-phosphate, the second step in glycolysis, and the reverse reaction during gluconeogenesis. This chain is Glucose-6-phosphate isomerase (PGI1), found in Eremothecium gossypii (strain ATCC 10895 / CBS 109.51 / FGSC 9923 / NRRL Y-1056) (Yeast).